Reading from the N-terminus, the 302-residue chain is Protein KTI12 homolog (302 aa).

ATP is bound at residue 8–15; it reads GQPCSGKS. The tract at residues 260–273 is calmodulin-binding; sequence LRRTFVKLMGQSSL.

It belongs to the KTI12 family. In terms of assembly, interacts with the elongator complex. Binds to calmodulin in a calcium-dependent manner. As to expression, expressed in roots, hypocotyls, cotyledons, shoot apices, stems, inflorescence apices, leaves and flowers.

Its subcellular location is the cytoplasm. The protein resides in the nucleus. Elongator complex-associated factor that is not a structural subunit but rather transiently contacts the complex. Regulates both meristem activity and organ growth; acts as a positive regulator of adaxial leaf patterning by modulating both cell division and differentiation. Required for an early step in synthesis of 5-carbamoylmethyl (ncm5) groups present on uridines (ncm5U) at the wobble position in tRNA. The polypeptide is Protein KTI12 homolog (Arabidopsis thaliana (Mouse-ear cress)).